Here is a 154-residue protein sequence, read N- to C-terminus: Protein phosphatase 1 regulatory subunit 27 (154 aa).

ANK repeat units lie at residues 63-92 (SGLA…DIHQ) and 96-125 (AGWT…DRDA).

In terms of assembly, interacts with DYSF and PPP1CA.

In terms of biological role, inhibits phosphatase activity of protein phosphatase 1 (PP1) complexes. This chain is Protein phosphatase 1 regulatory subunit 27 (PPP1R27), found in Homo sapiens (Human).